Here is a 174-residue protein sequence, read N- to C-terminus: MKLSNKTQALHDLIAPAVQACDVNLWGIEFIPQGKRSLLRIFIDKPVDETAEPVLNEDGETELGRGIGVQDCVRVTQQVGAILDVHDPISGEYALEVSSPGWDRPFFQLEQMSAYIGQQVALRLISAVENRRKFQAKLLLVDLENEMIQVEVDGKHVLEIDSHNIDKANLIYQD.

The protein belongs to the RimP family.

It localises to the cytoplasm. Functionally, required for maturation of 30S ribosomal subunits. In Acinetobacter baylyi (strain ATCC 33305 / BD413 / ADP1), this protein is Ribosome maturation factor RimP.